Reading from the N-terminus, the 458-residue chain is ATP synthase subunit beta (458 aa).

147–154 (GGAGVGKT) lines the ATP pocket.

Belongs to the ATPase alpha/beta chains family. F-type ATPases have 2 components, CF(1) - the catalytic core - and CF(0) - the membrane proton channel. CF(1) has five subunits: alpha(3), beta(3), gamma(1), delta(1), epsilon(1). CF(0) has three main subunits: a(1), b(2) and c(9-12). The alpha and beta chains form an alternating ring which encloses part of the gamma chain. CF(1) is attached to CF(0) by a central stalk formed by the gamma and epsilon chains, while a peripheral stalk is formed by the delta and b chains.

It is found in the cell inner membrane. The catalysed reaction is ATP + H2O + 4 H(+)(in) = ADP + phosphate + 5 H(+)(out). In terms of biological role, produces ATP from ADP in the presence of a proton gradient across the membrane. The catalytic sites are hosted primarily by the beta subunits. In Chromohalobacter salexigens (strain ATCC BAA-138 / DSM 3043 / CIP 106854 / NCIMB 13768 / 1H11), this protein is ATP synthase subunit beta.